We begin with the raw amino-acid sequence, 86 residues long: Small ribosomal subunit protein bS20 (86 aa).

Belongs to the bacterial ribosomal protein bS20 family.

Functionally, binds directly to 16S ribosomal RNA. The chain is Small ribosomal subunit protein bS20 from Rhodococcus jostii (strain RHA1).